The following is a 575-amino-acid chain: Dihydroxy-acid dehydratase (575 aa).

A disordered region spans residues 1–25; sequence MPTTDSARAADIKQPDIKPRSRDVT. The segment covering 8 to 25 has biased composition (basic and acidic residues); sequence RAADIKQPDIKPRSRDVT. Residue Cys-64 coordinates [2Fe-2S] cluster. Asp-96 provides a ligand contact to Mg(2+). Cys-137 lines the [2Fe-2S] cluster pocket. Mg(2+)-binding residues include Asp-138 and Lys-139. Residue Lys-139 is modified to N6-carboxylysine. Cys-214 is a binding site for [2Fe-2S] cluster. Glu-465 lines the Mg(2+) pocket. Catalysis depends on Ser-491, which acts as the Proton acceptor.

It belongs to the IlvD/Edd family. As to quaternary structure, homodimer. The cofactor is [2Fe-2S] cluster. Mg(2+) serves as cofactor.

It carries out the reaction (2R)-2,3-dihydroxy-3-methylbutanoate = 3-methyl-2-oxobutanoate + H2O. It catalyses the reaction (2R,3R)-2,3-dihydroxy-3-methylpentanoate = (S)-3-methyl-2-oxopentanoate + H2O. The protein operates within amino-acid biosynthesis; L-isoleucine biosynthesis; L-isoleucine from 2-oxobutanoate: step 3/4. Its pathway is amino-acid biosynthesis; L-valine biosynthesis; L-valine from pyruvate: step 3/4. Functions in the biosynthesis of branched-chain amino acids. Catalyzes the dehydration of (2R,3R)-2,3-dihydroxy-3-methylpentanoate (2,3-dihydroxy-3-methylvalerate) into 2-oxo-3-methylpentanoate (2-oxo-3-methylvalerate) and of (2R)-2,3-dihydroxy-3-methylbutanoate (2,3-dihydroxyisovalerate) into 2-oxo-3-methylbutanoate (2-oxoisovalerate), the penultimate precursor to L-isoleucine and L-valine, respectively. The protein is Dihydroxy-acid dehydratase of Mycolicibacterium paratuberculosis (strain ATCC BAA-968 / K-10) (Mycobacterium paratuberculosis).